We begin with the raw amino-acid sequence, 316 residues long: MSEVERALDVLLQEAEELCIGSSVVELDRIPTALEFCREFYSKNQPVVIRKALNWPAIGKWTPKYLIEALGDRSVDVAITPNGYADGLATQNGQEYFVLPLETKMKLSEVVRRLDDPTGAVHYIQKQNSNLSVDLPELAADLRVSDLDFAQQSFNKPPDAVNFWLGDERAVTSMHKDPYENVYCVISGHKDFVLIPPHQLSCVPRGIYPTGVYKTSDSGQFYIEPLRDEEGSDQFTEWVSVDPLSPDLAKYPEYARAKPLKVRVHAGDILYLPNYWFHHVSQSHKCIAVNFWYDLDYDSRYCYYRMLEQMTSARSG.

Cysteine 19 carries the post-translational modification Cysteine sulfenic acid (-SOH). Residues tyrosine 123 and threonine 172 each coordinate 2-oxoglutarate. A succinate-binding site is contributed by tyrosine 123. A JmjC domain is found at 124–310 (IQKQNSNLSV…YCYYRMLEQM (187 aa)). Fe cation contacts are provided by histidine 175 and aspartate 177. Asparagine 181, tyrosine 183, and lysine 190 together coordinate 2-oxoglutarate. 2 residues coordinate succinate: tyrosine 183 and lysine 190. Residue histidine 278 coordinates Fe cation. Tryptophan 292 lines the 2-oxoglutarate pocket.

In terms of assembly, homodimer; disulfide-linked. Requires Fe(2+) as cofactor. As to expression, expressed in the pars intercerebralis and fan-shaped body, regions known to be involved in sleep.

It is found in the nucleus. The protein localises to the cytoplasm. It carries out the reaction L-lysyl-[protein] + 2-oxoglutarate + O2 = (3S)-3-hydroxy-L-lysyl-[protein] + succinate + CO2. Bifunctional enzyme that acts both as an endopeptidase and 2-oxoglutarate-dependent monooxygenase. Endopeptidase that cleaves histones N-terminal tails at the carboxyl side of methylated arginine or lysine residues, to generate 'tailless nucleosomes', which may trigger transcription elongation. Hydroxylates the guanylate binding protein 128up. May be involved in regulation of behavior and circadian rhythms. The sequence is that of Bifunctional peptidase and (3S)-lysyl hydroxylase JMJD7 from Drosophila melanogaster (Fruit fly).